Consider the following 400-residue polypeptide: PHD finger protein 24 (400 aa).

Gly2 carries the N-myristoyl glycine lipid modification. A compositionally biased stretch (basic and acidic residues) spans 28–38; the sequence is LRDRPSIRRTG. The tract at residues 28-99 is disordered; the sequence is LRDRPSIRRT…PEEFDRTSRF (72 aa). Arg36 carries the post-translational modification Omega-N-methylarginine. Residue Ser43 is modified to Phosphoserine. Thr47 carries the post-translational modification Phosphothreonine. Ser51 carries the phosphoserine modification. Residues 78 to 97 are compositionally biased toward basic and acidic residues; it reads AWERLRDGRGVEPEEFDRTS. The PHD-type zinc-finger motif lies at 129–190; sequence NDEMCDVCEV…TGWSCHYCDN (62 aa).

This chain is PHD finger protein 24, found in Homo sapiens (Human).